The following is a 180-amino-acid chain: MFPMMTGFMNYGQQTVRAARYIGQSFMITLSHANRLPVTIQYPYEKSITSERFRGRIHFEFDKCIACEVCVRVCPIDLPVVDWRLETDIRKKRLLNYSIDFGICIFCGNCVEYCPTNCLSMTEEYELSIYDRHELNYNQIALGRLPMSVIGDYTIRTIMNSTQIKITTDKPLDSITITND.

4Fe-4S ferredoxin-type domains are found at residues 55 to 84 and 95 to 124; these read GRIH…VDWR and LNYS…MTEE. [4Fe-4S] cluster contacts are provided by C64, C67, C70, C74, C104, C107, C110, and C114.

It belongs to the complex I 23 kDa subunit family. As to quaternary structure, NDH is composed of at least 16 different subunits, 5 of which are encoded in the nucleus. It depends on [4Fe-4S] cluster as a cofactor.

The protein localises to the plastid. The protein resides in the chloroplast thylakoid membrane. It carries out the reaction a plastoquinone + NADH + (n+1) H(+)(in) = a plastoquinol + NAD(+) + n H(+)(out). The enzyme catalyses a plastoquinone + NADPH + (n+1) H(+)(in) = a plastoquinol + NADP(+) + n H(+)(out). NDH shuttles electrons from NAD(P)H:plastoquinone, via FMN and iron-sulfur (Fe-S) centers, to quinones in the photosynthetic chain and possibly in a chloroplast respiratory chain. The immediate electron acceptor for the enzyme in this species is believed to be plastoquinone. Couples the redox reaction to proton translocation, and thus conserves the redox energy in a proton gradient. The sequence is that of NAD(P)H-quinone oxidoreductase subunit I, chloroplastic from Drimys granadensis.